The following is a 306-amino-acid chain: tRNA dimethylallyltransferase (306 aa).

9 to 16 (GPTAIGKT) serves as a coordination point for ATP. 11 to 16 (TAIGKT) is a binding site for substrate. Residues 34–37 (DSMQ) form an interaction with substrate tRNA region.

The protein belongs to the IPP transferase family. As to quaternary structure, monomer. It depends on Mg(2+) as a cofactor.

The enzyme catalyses adenosine(37) in tRNA + dimethylallyl diphosphate = N(6)-dimethylallyladenosine(37) in tRNA + diphosphate. Functionally, catalyzes the transfer of a dimethylallyl group onto the adenine at position 37 in tRNAs that read codons beginning with uridine, leading to the formation of N6-(dimethylallyl)adenosine (i(6)A). The sequence is that of tRNA dimethylallyltransferase from Lactobacillus helveticus (strain DPC 4571).